Reading from the N-terminus, the 273-residue chain is DNA repair protein RecO (273 aa).

The segment at Gly-249 to Arg-273 is disordered. Residues Leu-252–Arg-273 show a composition bias toward basic and acidic residues.

Belongs to the RecO family.

In terms of biological role, involved in DNA repair and RecF pathway recombination. The polypeptide is DNA repair protein RecO (Heliobacterium modesticaldum (strain ATCC 51547 / Ice1)).